A 97-amino-acid chain; its full sequence is Eotaxin (97 aa).

The first 23 residues, 1–23 (MQLSTALLFLLLTATSFTSQVLA), serve as a signal peptide directing secretion. 2 disulfides stabilise this stretch: Cys32-Cys57 and Cys33-Cys73. The O-linked (GalNAc...) threonine glycan is linked to Thr94.

This sequence belongs to the intercrine beta (chemokine CC) family.

The protein localises to the secreted. In terms of biological role, in response to the presence of allergens, this protein directly promotes the accumulation of eosinophils (a prominent feature of allergic inflammatory reactions), but not lymphocytes, macrophages or neutrophils. Binds to CCR3. The sequence is that of Eotaxin (Ccl11) from Rattus norvegicus (Rat).